A 156-amino-acid chain; its full sequence is ATP synthase subunit b (156 aa).

A helical transmembrane segment spans residues 7–27; it reads LFAQMVVFLILAWFTMKFVWP.

The protein belongs to the ATPase B chain family. In terms of assembly, F-type ATPases have 2 components, F(1) - the catalytic core - and F(0) - the membrane proton channel. F(1) has five subunits: alpha(3), beta(3), gamma(1), delta(1), epsilon(1). F(0) has three main subunits: a(1), b(2) and c(10-14). The alpha and beta chains form an alternating ring which encloses part of the gamma chain. F(1) is attached to F(0) by a central stalk formed by the gamma and epsilon chains, while a peripheral stalk is formed by the delta and b chains.

It localises to the cell inner membrane. In terms of biological role, f(1)F(0) ATP synthase produces ATP from ADP in the presence of a proton or sodium gradient. F-type ATPases consist of two structural domains, F(1) containing the extramembraneous catalytic core and F(0) containing the membrane proton channel, linked together by a central stalk and a peripheral stalk. During catalysis, ATP synthesis in the catalytic domain of F(1) is coupled via a rotary mechanism of the central stalk subunits to proton translocation. Its function is as follows. Component of the F(0) channel, it forms part of the peripheral stalk, linking F(1) to F(0). In Paraburkholderia xenovorans (strain LB400), this protein is ATP synthase subunit b.